The sequence spans 315 residues: Porphobilinogen deaminase (315 aa).

Cysteine 234 carries the S-(dipyrrolylmethanemethyl)cysteine modification.

It belongs to the HMBS family. Monomer. Dipyrromethane is required as a cofactor.

It carries out the reaction 4 porphobilinogen + H2O = hydroxymethylbilane + 4 NH4(+). The protein operates within porphyrin-containing compound metabolism; protoporphyrin-IX biosynthesis; coproporphyrinogen-III from 5-aminolevulinate: step 2/4. In terms of biological role, tetrapolymerization of the monopyrrole PBG into the hydroxymethylbilane pre-uroporphyrinogen in several discrete steps. This chain is Porphobilinogen deaminase, found in Mycolicibacterium paratuberculosis (strain ATCC BAA-968 / K-10) (Mycobacterium paratuberculosis).